Consider the following 598-residue polypeptide: Arylsulfate sulfotransferase AssT (598 aa).

The signal sequence occupies residues 1 to 27 (MFHPYRKTLLSGTVALALGLFATGAIA). The 4-methylumbelliferone site is built by His279 and His383. Cysteines 445 and 451 form a disulfide. His463 contacts 4-methylumbelliferone. Residue His463 is the Nucleophile; sulfurylated histidine covalent intermediate of the active site.

Belongs to the aryl sulfotransferase family. Monomer.

The protein resides in the periplasm. It catalyses the reaction an aryl sulfate + a phenol = an aryl sulfate + a phenol. The catalysed reaction is 4-methylumbelliferone sulfate + phenol = phenyl sulfate + 4-methylumbelliferone. The enzyme catalyses 2-naphthyl sulfate + phenol = phenyl sulfate + 2-naphthol. Functionally, catalyzes the transfer of a sulfate group from a phenyl sulfate ester to other phenolic compounds. Is able to use several substrate donors and acceptors in vitro: using phenol as an acceptor substrate, 4-methylumbelliferyl sulfate is the best donor substrate, followed by beta-naphthyl sulfate, p-nitrophenyl sulfate (PNS), and alpha-naphthyl sulfate; using PNS as a donor substrate, alpha-naphthol is the best acceptor substrate, followed by phenol, resorcinol, p-acetaminophen, tyramine, and tyrosine. Cannot use 3'-phosphoadenosine-5'-phophosulfate (PAPS), the donor substrate of mammalian sulfotransferase. May be a detoxifying enzyme, converting toxic phenolic compounds into non-toxic materials. The protein is Arylsulfate sulfotransferase AssT of Lelliottia amnigena (Enterobacter amnigenus).